The primary structure comprises 336 residues: 7,8-didemethyl-8-hydroxy-5-deazariboflavin synthase (336 aa).

Positions I18–N249 constitute a Radical SAM core domain. Positions 32, 36, and 39 each coordinate [4Fe-4S] cluster.

Belongs to the radical SAM superfamily. CofG family. In terms of assembly, consists of two subunits, CofG and CofH. [4Fe-4S] cluster serves as cofactor.

The enzyme catalyses 5-amino-5-(4-hydroxybenzyl)-6-(D-ribitylimino)-5,6-dihydrouracil + S-adenosyl-L-methionine = 7,8-didemethyl-8-hydroxy-5-deazariboflavin + 5'-deoxyadenosine + L-methionine + NH4(+) + H(+). The protein operates within cofactor biosynthesis; coenzyme F0 biosynthesis. Functionally, catalyzes the radical-mediated synthesis of 7,8-didemethyl-8-hydroxy-5-deazariboflavin from 5-amino-5-(4-hydroxybenzyl)-6-(D-ribitylimino)-5,6-dihydrouracil. The chain is 7,8-didemethyl-8-hydroxy-5-deazariboflavin synthase from Synechococcus elongatus (strain ATCC 33912 / PCC 7942 / FACHB-805) (Anacystis nidulans R2).